Reading from the N-terminus, the 91-residue chain is DNA-directed RNA polymerase subunit omega (91 aa).

This sequence belongs to the RNA polymerase subunit omega family. In terms of assembly, the RNAP catalytic core consists of 2 alpha, 1 beta, 1 beta' and 1 omega subunit. When a sigma factor is associated with the core the holoenzyme is formed, which can initiate transcription.

It carries out the reaction RNA(n) + a ribonucleoside 5'-triphosphate = RNA(n+1) + diphosphate. Promotes RNA polymerase assembly. Latches the N- and C-terminal regions of the beta' subunit thereby facilitating its interaction with the beta and alpha subunits. The sequence is that of DNA-directed RNA polymerase subunit omega from Edwardsiella ictaluri (strain 93-146).